A 60-amino-acid polypeptide reads, in one-letter code: Large ribosomal subunit protein bL32 (60 aa).

The disordered stretch occupies residues 1-60 (MAVQQNKKSRSARDMRRSHDALEPNALSVEKSTGEVHLRHHVSPDGFYRGRKVIDKGADE). Over residues 11 to 22 (SARDMRRSHDAL) the composition is skewed to basic and acidic residues.

This sequence belongs to the bacterial ribosomal protein bL32 family.

The chain is Large ribosomal subunit protein bL32 from Stutzerimonas stutzeri (strain A1501) (Pseudomonas stutzeri).